The following is a 200-amino-acid chain: MKCPRCGKQEIRVLESRSAEGGQSVRRRRECMSCGYRFTTYERIEFMPIMVIKRDGSRESFNRNKILQGVMRACQKTQVSVKQMEELVNEIEEKLQLEDVQEVTTLRIGEMVLERLQRLSEVAYVRFASVYRKFQGIKDFVTELEQLERLETHLRRDLERPLRNSPPSESESTASPDWVGGIPQLLDQNDTSSNLSEIPK.

A zinc finger spans residues 3 to 34; sequence CPRCGKQEIRVLESRSAEGGQSVRRRRECMSC. Positions 49-139 constitute an ATP-cone domain; it reads IMVIKRDGSR…VYRKFQGIKD (91 aa). Residues 158–200 are disordered; sequence LERPLRNSPPSESESTASPDWVGGIPQLLDQNDTSSNLSEIPK. Residues 186-200 show a composition bias toward polar residues; that stretch reads LDQNDTSSNLSEIPK.

It belongs to the NrdR family. Zn(2+) serves as cofactor.

Its function is as follows. Negatively regulates transcription of bacterial ribonucleotide reductase nrd genes and operons by binding to NrdR-boxes. The chain is Transcriptional repressor NrdR from Synechococcus sp. (strain JA-3-3Ab) (Cyanobacteria bacterium Yellowstone A-Prime).